Reading from the N-terminus, the 225-residue chain is Pre-mRNA-splicing factor SPF27 (225 aa).

Ala2 carries the N-acetylalanine modification. Residue Ser94 is modified to Phosphoserine. Residues 138-222 are a coiled coil; the sequence is YNENLVHMIE…HGEANKENIR (85 aa).

This sequence belongs to the SPF27 family. Component of the pre-catalytic and catalytic spliceosome complexes. Component of the postcatalytic spliceosome P complex. Component of the PRP19-CDC5L splicing complex composed of a core complex comprising a homotetramer of PRPF19, CDC5L, PLRG1 and BCAS2, and at least three less stably associated proteins CTNNBL1, CWC15 and HSPA8. Interacts directly in the complex with PRPF19, CDC5L and PLRG1. Ubiquitously expressed.

The protein localises to the nucleus. Its subcellular location is the nucleolus. Functionally, required for pre-mRNA splicing as component of the activated spliceosome. Component of the PRP19-CDC5L complex that forms an integral part of the spliceosome and is required for activating pre-mRNA splicing. May have a scaffolding role in the spliceosome assembly as it contacts all other components of the core complex. The PRP19-CDC5L complex may also play a role in the response to DNA damage (DDR). This chain is Pre-mRNA-splicing factor SPF27 (BCAS2), found in Homo sapiens (Human).